The sequence spans 142 residues: Hemoglobin subunit alpha-B (142 aa).

The 141-residue stretch at 2–142 folds into the Globin domain; it reads VLSPTDKSNV…VSTVLTSKYR (141 aa). Histidine 59 is an O2 binding site. Histidine 88 contributes to the heme b binding site.

The protein belongs to the globin family. As to quaternary structure, heterotetramer of two alpha chains and two beta chains. As to expression, red blood cells.

Its function is as follows. Involved in oxygen transport from the lung to the various peripheral tissues. The chain is Hemoglobin subunit alpha-B (HBAB) from Otolemur crassicaudatus (Brown greater galago).